The primary structure comprises 413 residues: CinA-like protein (413 aa).

The protein belongs to the CinA family.

The protein is CinA-like protein of Geotalea daltonii (strain DSM 22248 / JCM 15807 / FRC-32) (Geobacter daltonii).